The sequence spans 511 residues: Ribonuclease Y (511 aa).

The helical transmembrane segment at 3–23 threads the bilayer; it reads VGILIGIIILGVVGFIQYTLI. One can recognise a KH domain in the interval 201–286; sequence TVHVVALPND…EMVERAIKDV (86 aa). Residues 327-420 form the HD domain; that stretch reads VLKHSIEVSY…VQAADAISAA (94 aa).

The protein belongs to the RNase Y family.

The protein localises to the cell membrane. In terms of biological role, endoribonuclease that initiates mRNA decay. This Clostridium perfringens (strain ATCC 13124 / DSM 756 / JCM 1290 / NCIMB 6125 / NCTC 8237 / Type A) protein is Ribonuclease Y.